A 517-amino-acid chain; its full sequence is Pentatricopeptide repeat-containing protein At1g13040, mitochondrial (517 aa).

A mitochondrion-targeting transit peptide spans 1-57 (MHQTLGAVRLAYRSRIANLVKSGMIDNAVQVFDEMRHSSYRVFSFDYNRFIGVLVRE). PPR repeat units follow at residues 8–42 (VRLA…SYRV), 43–77 (FSFD…GFSL), 78–112 (IPFT…GFIP), 113–147 (DIWA…GREP), 148–182 (DVVS…GVSP), 183–218 (DNKA…RVKL), 219–253 (STVV…GCEP), 254–288 (DLVT…GIQL), 289–320 (DAYS…MEPR), 324–358 (DVVS…GMVM), 359–393 (NVVT…GLSP), 394–428 (DRIF…EITP), 429–463 (DAIS…ECCP), and 464–498 (DELT…GFTL).

Belongs to the PPR family. P subfamily.

Its subcellular location is the mitochondrion. This chain is Pentatricopeptide repeat-containing protein At1g13040, mitochondrial, found in Arabidopsis thaliana (Mouse-ear cress).